The following is a 379-amino-acid chain: ATP-sensitive inward rectifier potassium channel 10 (379 aa).

Residues 1-61 (MTSVAKVYYS…LKDLWTTFID (61 aa)) lie on the Cytoplasmic side of the membrane. A 1,2-dioctanoyl-sn-glycero-3-phospho-(1D-myo-inositol-4,5-bisphosphate)-binding site is contributed by Arg-36. Residues 62–88 (MQWRYKLLLFSATFAGTWFLFGVVWYL) form a helical membrane-spanning segment. Residues 89-114 (VAVAHGDLLELGPPANHTPCVVQVHT) lie on the Extracellular side of the membrane. Cys-108 and Cys-140 are oxidised to a cystine. Positions 115–131 (LTGAFLFSLESQTTIGY) form an intramembrane region, discontinuously helical; Pore-forming. The Selectivity filter motif lies at 128-133 (TIGYGF). Over 132–140 (GFRYISEEC) the chain is Extracellular. Residues 141–166 (PLAIVLLIAQLVLTTILEIFITGTFL) traverse the membrane as a helical segment. Topologically, residues 167 to 379 (AKIARPKKRA…SALSVRISNV (213 aa)) are cytoplasmic. 1,2-dioctanoyl-sn-glycero-3-phospho-(1D-myo-inositol-4,5-bisphosphate)-binding residues include Lys-168, Arg-171, and Lys-173. 210-217 (GCQVTGKL) lines the ATP pocket.

Belongs to the inward rectifier-type potassium channel (TC 1.A.2.1) family. KCNJ10 subfamily. In terms of assembly, homotetramer. In kidney cells, it forms heteromeric channels with Kir5.1/KCNJ16; this interaction is required for KCNJ16 localization to the basolateral membrane. Interacts with MAGI1, alone and possibly as a heteromer with KCNJ16; this interaction may facilitate KCNJ10/KCNJ16 potassium channel expression at the basolateral membrane in kidney cells. Interacts with PATJ. Predominantly expressed in the brain, including in glial cells of the cerebellum and forebrain. Expressed at lower levels in the kidney, and other peripheral tissues.

Its subcellular location is the membrane. It is found in the basolateral cell membrane. The catalysed reaction is K(+)(in) = K(+)(out). With respect to regulation, channel activity is strongly regulated by variations of cytosolic pH; channels are activated by alkaline and inhibited by acidic pH values. Activated by phosphatidylinositol 4,5 biphosphate (PtdIns(4,5)P2). Inhibited by Ba(2+) and Cs(+). In terms of biological role, may be responsible for potassium buffering action of glial cells in the brain. Inward rectifier potassium channels are characterized by a greater tendency to allow potassium to flow into the cell rather than out of it. Their voltage dependence is regulated by the concentration of extracellular potassium; as external potassium is raised, the voltage range of the channel opening shifts to more positive voltages. The inward rectification is mainly due to the blockage of outward current by internal magnesium. Can be blocked by extracellular barium and cesium. In the kidney, together with KCNJ16, mediates basolateral K(+) recycling in distal tubules; this process is critical for Na(+) reabsorption at the tubules. The polypeptide is ATP-sensitive inward rectifier potassium channel 10 (Rattus norvegicus (Rat)).